The primary structure comprises 200 residues: dTTP/UTP pyrophosphatase (200 aa).

The active-site Proton acceptor is Asp81.

Belongs to the Maf family. YhdE subfamily. Requires a divalent metal cation as cofactor.

The protein localises to the cytoplasm. It catalyses the reaction dTTP + H2O = dTMP + diphosphate + H(+). It carries out the reaction UTP + H2O = UMP + diphosphate + H(+). Nucleoside triphosphate pyrophosphatase that hydrolyzes dTTP and UTP. May have a dual role in cell division arrest and in preventing the incorporation of modified nucleotides into cellular nucleic acids. This Cupriavidus metallidurans (strain ATCC 43123 / DSM 2839 / NBRC 102507 / CH34) (Ralstonia metallidurans) protein is dTTP/UTP pyrophosphatase.